Here is a 985-residue protein sequence, read N- to C-terminus: Probable oxidoreductase YjgC (985 aa).

The 77-residue stretch at 3 to 79 folds into the 2Fe-2S ferredoxin-type domain; sequence GKKTITINGV…GDVIDTLSPD (77 aa). 4 residues coordinate [2Fe-2S] cluster: Cys37, Cys48, Cys51, and Cys63. The region spanning 79-119 is the 4Fe-4S His(Cys)3-ligated-type domain; the sequence is DVKKAQVIGMDKILYNHELYCTVCDYNNGGCEIHNTVKEMK. [4Fe-4S] cluster-binding residues include His95, Cys99, Cys102, Cys109, Cys148, Cys151, Cys154, Cys158, Cys191, Cys194, Cys197, Cys201, Cys265, Cys268, Cys272, and Cys300. 2 4Fe-4S ferredoxin-type domains span residues 139–170 and 182–211; these read PFYRYDPDQCILCGRCVEACQDVQVTETLTID and NDVPINESSCVSCGHCSTVCPCNAMMEKGM. Residues 258-314 form the 4Fe-4S Mo/W bis-MGD-type domain; it reads IKKTKTVCTYCGVGCSFDVWTKGRDILKVEPQEEAPANGISTCVKGKFGWDFVNSEE.

It in the C-terminal section; belongs to the prokaryotic molybdopterin-containing oxidoreductase family. [2Fe-2S] cluster is required as a cofactor. It depends on [4Fe-4S] cluster as a cofactor. Requires Mo-bis(molybdopterin guanine dinucleotide) as cofactor.

This Bacillus subtilis (strain 168) protein is Probable oxidoreductase YjgC (yjgC).